The following is a 628-amino-acid chain: Netrin-4 (628 aa).

The first 18 residues, 1 to 18, serve as a signal peptide directing secretion; it reads MGSCARLLLLWGCTVVAA. A Laminin N-terminal domain is found at 30-261; that stretch reads CEKACNPRMG…AIYDFIVKGS (232 aa). 2 N-linked (GlcNAc...) asparagine glycosylation sites follow: N56 and N163. Intrachain disulfides connect C262–C271, C264–C293, C295–C304, C307–C329, C332–C341, C334–C359, C362–C371, C374–C392, C395–C413, C397–C420, C422–C431, and C434–C446. 3 Laminin EGF-like domains span residues 262–331, 332–394, and 395–448; these read CFCN…ECRT, CKCN…ACKP, and CSCH…GCRP. N353 is a glycosylation site (N-linked (GlcNAc...) asparagine). N-linked (GlcNAc...) asparagine glycosylation is present at N483. Disulfide bonds link C506–C576 and C520–C627. One can recognise an NTR domain in the interval 506-627; the sequence is CECKEQTLGN…KVMDILKREC (122 aa).

May form a homodimer. In terms of tissue distribution, expressed in kidney, spleen, mammary gland, aorta, heart, ovary, prostate and fetal spleen.

It localises to the secreted. The protein localises to the extracellular space. It is found in the extracellular matrix. Its subcellular location is the basement membrane. May play an important role in neural, kidney and vascular development. Promotes neurite elongation from olfactory bulb explants. The sequence is that of Netrin-4 (NTN4) from Homo sapiens (Human).